Here is a 2262-residue protein sequence, read N- to C-terminus: Protein Ycf2 (2262 aa).

1607 to 1614 (GFIGTGRS) is a binding site for ATP.

This sequence belongs to the Ycf2 family.

It localises to the plastid. Its subcellular location is the chloroplast stroma. In terms of biological role, probable ATPase of unknown function. Its presence in a non-photosynthetic plant (Epifagus virginiana) and experiments in tobacco indicate that it has an essential function which is probably not related to photosynthesis. The polypeptide is Protein Ycf2 (Nuphar advena (Common spatterdock)).